Reading from the N-terminus, the 249-residue chain is Mediator of RNA polymerase II transcription subunit 19 (249 aa).

Disordered stretches follow at residues 1-68 (MEGF…SSRR) and 178-249 (QPPK…SGLR). Over residues 9–18 (AASEPSSIPS) the composition is skewed to low complexity. Over residues 45 to 56 (VPGPPLPIPPPL) the composition is skewed to pro residues. 2 stretches are compositionally biased toward basic residues: residues 179–190 (PPKKKNKKHKQS) and 221–233 (RRKKKDKKKKKSR).

The protein belongs to the Mediator complex subunit 19 family. Component of the Mediator complex.

Its subcellular location is the nucleus. Functionally, component of the Mediator complex, a coactivator involved in the regulated transcription of nearly all RNA polymerase II-dependent genes. Mediator functions as a bridge to convey information from gene-specific regulatory proteins to the basal RNA polymerase II transcription machinery. Mediator is recruited to promoters by direct interactions with regulatory proteins and serves as a scaffold for the assembly of a functional preinitiation complex with RNA polymerase II and the general transcription factors. The polypeptide is Mediator of RNA polymerase II transcription subunit 19 (med19) (Xenopus tropicalis (Western clawed frog)).